We begin with the raw amino-acid sequence, 316 residues long: Transcription initiation factor IIB (316 aa).

The TFIIB-type zinc finger occupies 11–42 (PKVTCPNHPDALLVEDYRAGDMICSECGLVVG). Positions 15, 18, 34, and 37 each coordinate Zn(2+). 2 tandem repeats follow at residues 124–200 (MSDR…LILK) and 218–294 (FCSN…LIYP).

It belongs to the TFIIB family.

It is found in the nucleus. The protein resides in the chromosome. It carries out the reaction L-lysyl-[protein] + acetyl-CoA = N(6)-acetyl-L-lysyl-[protein] + CoA + H(+). Its function is as follows. General transcription factor that plays a role in transcription initiation by RNA polymerase II (Pol II). Involved in the pre-initiation complex (PIC) formation and Pol II recruitment at promoter DNA. Together with the TATA box-bound TBP forms the core initiation complex and provides a bridge between TBP and the Pol II-TFIIF complex. Released from the PIC early following the onset of transcription during the initiation and elongation transition and reassociates with TBP during the next transcription cycle. Associates with chromatin to core promoter-specific regions. Binds to two distinct DNA core promoter consensus sequence elements in a TBP-independent manner; these IIB-recognition elements (BREs) are localized immediately upstream (BREu), 5'-[GC][GC][GA]CGCC-3', and downstream (BREd), 5'-[GA]T[TGA][TG][GT][TG][TG]-3', of the TATA box element. Modulates transcription start site selection. Also exhibits autoacetyltransferase activity that contributes to the activated transcription. The sequence is that of Transcription initiation factor IIB from Xenopus laevis (African clawed frog).